The primary structure comprises 268 residues: Stomatin homolog PYRAB06580 (268 aa).

Residues Met1 to Leu21 form a helical membrane-spanning segment. 2 coiled-coil regions span residues Gly125–Asp152 and Lys178–His213.

This sequence belongs to the band 7/mec-2 family. Homotrimer.

The protein resides in the membrane. The polypeptide is Stomatin homolog PYRAB06580 (Pyrococcus abyssi (strain GE5 / Orsay)).